The following is a 287-amino-acid chain: 3-beta-hydroxysteroid sulfotransferase (287 aa).

Lysine 44–tryptophan 49 serves as a coordination point for 3'-phosphoadenylyl sulfate. Substrate-binding residues include tryptophan 72 and tryptophan 77. Histidine 99 serves as the catalytic Proton acceptor. 3'-phosphoadenylyl sulfate is bound by residues arginine 121, serine 129, tyrosine 184, serine 218 to methionine 223, and arginine 247 to glycine 249.

It belongs to the sulfotransferase 1 family. Homodimer. As to expression, liver, intestine and kidney.

It localises to the cytoplasm. The catalysed reaction is an alcohol + 3'-phosphoadenylyl sulfate = an alkyl sulfate + adenosine 3',5'-bisphosphate + H(+). In terms of biological role, sulfotransferase that utilizes 3'-phospho-5'-adenylyl sulfate (PAPS) as sulfonate donor to catalyze the sulfonation of 3-beta-hydroxyl groups of neutral steroids. High preference for C21 steroid (pregnenolone). This is 3-beta-hydroxysteroid sulfotransferase (STD2) from Cavia porcellus (Guinea pig).